Here is a 418-residue protein sequence, read N- to C-terminus: Equilibrative nucleotide transporter 4 (418 aa).

11 helical membrane passes run 20 to 40, 54 to 74, 85 to 105, 108 to 128, 147 to 169, 186 to 206, 264 to 284, 291 to 311, 326 to 346, 353 to 373, and 392 to 412; these read MVVCCILGIGSLFSWNSMLTI, SRVFTLIYQPIALGTIMILAY, ILTGYILFTISTFLLIVLDLT, GHGGIGHYIVLCTIVASFGLA, LIQSYMAGSGMAGALTSVLRLIT, IFLAISTFIELLCVILYAYVF, HAVNLFLIYVLTLSIFPGFLY, GLGDWYALILVATYNFWDLFG, KALTIAVLTRYFLVPAFYFTA, WMIMLVSILGLTTGHLTVCIM, and LVVFILGGAVVGISLGWLWLI.

Belongs to the SLC29A/ENT transporter (TC 2.A.57) family. As to expression, expressed in leaves and at lowe levels in stems and flowers.

The protein resides in the cell membrane. Its function is as follows. Nucleoside transporter that can mediate uptake of adenosine, uridine, guanosine or cytidine when expressed in a heterologous system (yeast). This Arabidopsis thaliana (Mouse-ear cress) protein is Equilibrative nucleotide transporter 4 (ENT4).